A 1641-amino-acid chain; its full sequence is Ophiophagus venom factor (1641 aa).

The signal sequence occupies residues 1–22 (MEGMALYLVAALLIGFPGSSHG). N-linked (GlcNAc...) asparagine glycosylation is found at Asn181 and Asn209. Residues Pro507, Asp530, Val531, and Asp533 each contribute to the Mg(2+) site. Intrachain disulfides connect Cys535/Cys796, Cys604/Cys639, Cys672/Cys699, Cys673/Cys706, Cys686/Cys707, Cys852/Cys1491, Cys1336/Cys1467, Cys1367/Cys1436, Cys1484/Cys1489, Cys1496/Cys1568, Cys1515/Cys1639, and Cys1615/Cys1624. Residues 645 to 728 (RRRRSSVLLL…WESGLFLPRN (84 aa)) constitute a propeptide that is removed on maturation. The interval 649 to 727 (SSVLLLDSKA…QWESGLFLPR (79 aa)) is C3a-like domain. In terms of domain architecture, Anaphylatoxin-like spans 672–707 (CCEDSMHENPMGYTCEKRAKYIQEGDACKAAFLECC). Positions 731–742 (EDGFIQDSDIIP) are factor B binding site. A propeptide spanning residues 981-1259 (HLIITPSGCG…VMLFQALAEY (279 aa)) is cleaved from the precursor. The C3d-like domain stretch occupies residues 981–1259 (HLIITPSGCG…VMLFQALAEY (279 aa)). Residues 989–992 (CGEQ) constitute a cross-link (isoglutamyl cysteine thioester (Cys-Gln)). The segment at 1186–1249 (VLMAASTGKN…GGTYGQTQAT (64 aa)) is factor H binding site. Residues 1496–1639 (CSLLSQQEKI…LSNILTIFGC (144 aa)) form the NTR domain.

This sequence belongs to the venom complement C3 homolog family. Heterotrimer of alpha, beta and gamma chains; disulfide-linked. May be active with factor B in the presence of factor D. Post-translationally, first processed by the removal of 4 Arg residues by furin-type protease, forming two chains, alpha and gamma/beta precursor, linked by a disulfide bond. Probably, a cobrin-like protease cleaves the C3a-like domain and then the C3d-like domain, generating the mature venom factor (OVF). The beta chain is not glycosylated. Expressed by the venom gland.

Its subcellular location is the secreted. In terms of biological role, complement-activating protein in cobra venom. It is a structural and functional analog of complement component C3b, the activated form of C3. It binds factor B (CFB), which is subsequently cleaved by factor D (CFD) to form the bimolecular complex OVF/Bb. OVF/Bb is a C3/C5 convertase that cleaves both complement components C3 and C5. Structurally, it resembles the C3b degradation product C3c, which is not able to form a C3/C5 convertase. Unlike C3b/Bb, OVF/Bb is a stable complex and completely resistant to the actions of complement regulatory factors H (CFH) and I (CFI). Therefore, OVF continuously activates complement. As a result, OVF exhibits complement-depleting activity. This is Ophiophagus venom factor from Ophiophagus hannah (King cobra).